The following is a 552-amino-acid chain: Urocanate hydratase (552 aa).

Residues Gly49–Gly50, Gln127, Gly173–Gly175, Glu193, Arg198, Asn239–Ala240, Gln260–His264, Tyr270–Ile271, and Tyr319 each bind NAD(+). The active site involves Cys407. Gly489 serves as a coordination point for NAD(+).

The protein belongs to the urocanase family. NAD(+) serves as cofactor.

Its subcellular location is the cytoplasm. It catalyses the reaction 4-imidazolone-5-propanoate = trans-urocanate + H2O. It participates in amino-acid degradation; L-histidine degradation into L-glutamate; N-formimidoyl-L-glutamate from L-histidine: step 2/3. Functionally, catalyzes the conversion of urocanate to 4-imidazolone-5-propionate. This chain is Urocanate hydratase, found in Geobacillus sp. (strain WCH70).